The sequence spans 362 residues: Guanine nucleotide-binding protein alpha-10 subunit (362 aa).

G2 is lipidated: N-myristoyl glycine. C4 is lipidated: S-palmitoyl cysteine. Residues 35 to 362 (LEQSVLLIGP…QENLKDTGMI (328 aa)) enclose the G-alpha domain. Residues 38 to 51 (SVLLIGPGESGKST) are G1 motif. Residues 43–50 (GPGESGKS), 184–190 (VRIRVPT), 209–213 (DCGGQ), 278–281 (NKID), and A335 each bind GTP. Positions 50 and 190 each coordinate Mg(2+). Residues 182–190 (DIVRIRVPT) form a G2 motif region. Residues 205–214 (LSVIDCGGQR) form a G3 motif region. The G4 motif stretch occupies residues 274–281 (ILFLNKID). Residues 333–337 (TCAIS) are G5 motif.

It belongs to the G-alpha family. In terms of assembly, g proteins are composed of 3 units; alpha, beta and gamma. The alpha chain contains the guanine nucleotide binding site.

Functionally, guanine nucleotide-binding proteins (G proteins) are involved as modulators or transducers in various transmembrane signaling systems. This Caenorhabditis briggsae protein is Guanine nucleotide-binding protein alpha-10 subunit (gpa-10).